A 419-amino-acid chain; its full sequence is Glutamate dehydrogenase (419 aa).

Lysine 105 is an active-site residue. Glycine 219 to tyrosine 225 provides a ligand contact to NAD(+).

Belongs to the Glu/Leu/Phe/Val dehydrogenases family. Homohexamer.

It catalyses the reaction L-glutamate + NAD(+) + H2O = 2-oxoglutarate + NH4(+) + NADH + H(+). The enzyme catalyses L-glutamate + NADP(+) + H2O = 2-oxoglutarate + NH4(+) + NADPH + H(+). In Thermococcus profundus, this protein is Glutamate dehydrogenase (gdhA).